The following is a 124-amino-acid chain: PEP-dependent dihydroxyacetone kinase 1, phosphoryl donor subunit DhaM (124 aa).

The region spanning Pro4 to Lys124 is the PTS EIIA type-4 domain. His12 serves as the catalytic Tele-phosphohistidine intermediate.

This sequence belongs to the PEP-utilizing enzyme family. Homodimer. The dihydroxyacetone kinase complex is composed of a homodimer of DhaM, a homodimer of DhaK and the subunit DhaL.

Its subcellular location is the cytoplasm. The enzyme catalyses dihydroxyacetone + phosphoenolpyruvate = dihydroxyacetone phosphate + pyruvate. In terms of biological role, component of the dihydroxyacetone kinase complex, which is responsible for the phosphoenolpyruvate (PEP)-dependent phosphorylation of dihydroxyacetone. DhaM serves as the phosphoryl donor. Is phosphorylated by phosphoenolpyruvate in an EI- and HPr-dependent reaction, and a phosphorelay system on histidine residues finally leads to phosphoryl transfer to DhaL and dihydroxyacetone. The chain is PEP-dependent dihydroxyacetone kinase 1, phosphoryl donor subunit DhaM from Listeria innocua serovar 6a (strain ATCC BAA-680 / CLIP 11262).